The chain runs to 133 residues: UPF0047 protein Rv2556c (133 aa).

It belongs to the UPF0047 family.

This is UPF0047 protein Rv2556c from Mycobacterium tuberculosis (strain ATCC 25618 / H37Rv).